Here is a 571-residue protein sequence, read N- to C-terminus: Urease subunit alpha (571 aa).

The 440-residue stretch at 132–571 (GAIDTHIHFI…LPMGQKYFLF (440 aa)) folds into the Urease domain. Ni(2+) is bound by residues His137, His139, and Lys220. Lys220 bears the N6-carboxylysine mark. His222 lines the substrate pocket. His249 and His275 together coordinate Ni(2+). Catalysis depends on His323, which acts as the Proton donor. Asp363 is a binding site for Ni(2+).

Belongs to the metallo-dependent hydrolases superfamily. Urease alpha subunit family. Heterotrimer of UreA (gamma), UreB (beta) and UreC (alpha) subunits. Three heterotrimers associate to form the active enzyme. It depends on Ni cation as a cofactor. In terms of processing, carboxylation allows a single lysine to coordinate two nickel ions.

The protein resides in the cytoplasm. The catalysed reaction is urea + 2 H2O + H(+) = hydrogencarbonate + 2 NH4(+). The protein operates within nitrogen metabolism; urea degradation; CO(2) and NH(3) from urea (urease route): step 1/1. In Corynebacterium urealyticum (strain ATCC 43042 / DSM 7109), this protein is Urease subunit alpha.